Here is a 1073-residue protein sequence, read N- to C-terminus: Error-prone DNA polymerase (1073 aa).

The tract at residues 41 to 73 is disordered; it reads EAEPECLSTPRPGPGSTEVPGERRGSRQGERSG. The span at 60-73 shows a compositional bias: basic and acidic residues; that stretch reads PGERRGSRQGERSG.

This sequence belongs to the DNA polymerase type-C family. DnaE2 subfamily.

It is found in the cytoplasm. It catalyses the reaction DNA(n) + a 2'-deoxyribonucleoside 5'-triphosphate = DNA(n+1) + diphosphate. In terms of biological role, DNA polymerase involved in damage-induced mutagenesis and translesion synthesis (TLS). It is not the major replicative DNA polymerase. The sequence is that of Error-prone DNA polymerase from Corynebacterium efficiens (strain DSM 44549 / YS-314 / AJ 12310 / JCM 11189 / NBRC 100395).